A 148-amino-acid polypeptide reads, in one-letter code: MPTFKLVLSDPISGKARQFEIKDPLAQRFIGLKIGDELDGSVLKDFLELPKGAKIRITGGSGIEGAPMHPGVPGPVKRYILADGPPGYWPPKRGMRKRKLVRGNTISDSIVQINAVIVYPQGYSGPPAIPLGAKEIEKLTKAKEGTPA.

This sequence belongs to the eukaryotic ribosomal protein eS6 family.

This chain is Small ribosomal subunit protein eS6, found in Pyrobaculum islandicum (strain DSM 4184 / JCM 9189 / GEO3).